The following is a 437-amino-acid chain: Adenylosuccinate synthetase (437 aa).

GTP contacts are provided by residues 12–18 (GDEGKGK) and 40–42 (GHT). Catalysis depends on aspartate 13, which acts as the Proton acceptor. 2 residues coordinate Mg(2+): aspartate 13 and glycine 40. Residues 13-16 (DEGK), 38-41 (NAGH), threonine 128, arginine 142, glutamine 223, threonine 238, and arginine 302 each bind IMP. Histidine 41 acts as the Proton donor in catalysis. Positions 119–138 (QRGERRIGTTGRGIGPTYAD) are disordered. Residue 298–304 (TTTGRRR) coordinates substrate. GTP is bound by residues arginine 304, 330 to 332 (KLD), and 412 to 414 (SLG).

It belongs to the adenylosuccinate synthetase family. Homodimer. Requires Mg(2+) as cofactor.

The protein localises to the cytoplasm. The enzyme catalyses IMP + L-aspartate + GTP = N(6)-(1,2-dicarboxyethyl)-AMP + GDP + phosphate + 2 H(+). The protein operates within purine metabolism; AMP biosynthesis via de novo pathway; AMP from IMP: step 1/2. In terms of biological role, plays an important role in the de novo pathway of purine nucleotide biosynthesis. Catalyzes the first committed step in the biosynthesis of AMP from IMP. The polypeptide is Adenylosuccinate synthetase (Synechococcus sp. (strain WH7803)).